Reading from the N-terminus, the 393-residue chain is Major outer membrane porin, serovar E (393 aa).

Positions 1 to 22 (MKKLLKSVLVFAALSSASSLQA) are cleaved as a signal peptide.

It belongs to the chlamydial porin (CP) (TC 1.B.2) family. In terms of assembly, part of a disulfide cross-linked outer membrane complex (COMC) composed of the major outer membrane porin (MOMP), the small cysteine-rich protein (OmcA) and the large cysteine-rich periplasmic protein (OmcB).

The protein localises to the cell outer membrane. Its function is as follows. In elementary bodies (EBs, the infectious stage, which is able to survive outside the host cell) provides the structural integrity of the outer envelope through disulfide cross-links with the small cysteine-rich protein and the large cysteine-rich periplasmic protein. It has been described in publications as the Sarkosyl-insoluble COMC (Chlamydia outer membrane complex), and serves as the functional equivalent of peptidoglycan. In terms of biological role, permits diffusion of specific solutes through the outer membrane. The chain is Major outer membrane porin, serovar E (ompA) from Chlamydia trachomatis.